The sequence spans 325 residues: Homocysteine S-methyltransferase 2 (325 aa).

The Hcy-binding domain occupies 6-321 (LKQFLADNPK…KDIQEISAAV (316 aa)). T138 is modified (phosphothreonine). Residues C239, C306, and C307 each coordinate Zn(2+).

It depends on Zn(2+) as a cofactor.

Its subcellular location is the cytoplasm. It localises to the nucleus. The catalysed reaction is S-methyl-L-methionine + L-homocysteine = 2 L-methionine + H(+). Its function is as follows. Homocysteine S-methyltransferase involved in the conversion of S-adenosylmethionine (AdoMet) to methionine to control the methionine/AdoMet ratio. Also converts S-methylmethionine (SMM) to methionine. This chain is Homocysteine S-methyltransferase 2 (SAM4), found in Saccharomyces cerevisiae (strain ATCC 204508 / S288c) (Baker's yeast).